A 337-amino-acid chain; its full sequence is MIEPLDSPASDSDFLDYPSALGNCTDEQISFKMQYLPVIYSIIFLVGFPGNTVAISIYIFKMRPWRGSTVIMLNLALTDLLYLTSLPFLIHYYASGENWIFGDFMCKFIRFGFHFNLYSSILFLTCFSLFRYVVIIHPMSCFSIQKTRWAVVACAGVWVISLVAVMPMTFLITSTTRTNRSACLDLTSSDDLTTIKWYNLILTATTFCLPLVIVTLCYTTIISTLTHGPRTHSCFKQKARRLTILLLLVFYICFLPFHILRVIRIESRLLSISCSIESHIHEAYIVSRPLAALNTFGNLLLYVVVSNNFQQAFCSIVRCKASGDLEQGKKDSCSNNP.

Residues 1-38 are Extracellular-facing; sequence MIEPLDSPASDSDFLDYPSALGNCTDEQISFKMQYLPV. Asparagine 23 is a glycosylation site (N-linked (GlcNAc...) asparagine). A helical transmembrane segment spans residues 39-59; the sequence is IYSIIFLVGFPGNTVAISIYI. Residues 60–69 lie on the Cytoplasmic side of the membrane; that stretch reads FKMRPWRGST. Residues 70–90 traverse the membrane as a helical segment; that stretch reads VIMLNLALTDLLYLTSLPFLI. Residues 91–116 are Extracellular-facing; that stretch reads HYYASGENWIFGDFMCKFIRFGFHFN. Cysteine 106 and cysteine 183 form a disulfide bridge. Residues 117-137 form a helical membrane-spanning segment; the sequence is LYSSILFLTCFSLFRYVVIIH. The Cytoplasmic portion of the chain corresponds to 138–151; that stretch reads PMSCFSIQKTRWAV. A helical transmembrane segment spans residues 152-172; it reads VACAGVWVISLVAVMPMTFLI. At 173-200 the chain is on the extracellular side; sequence TSTTRTNRSACLDLTSSDDLTTIKWYNL. Residues 201–221 traverse the membrane as a helical segment; that stretch reads ILTATTFCLPLVIVTLCYTTI. Topologically, residues 222-242 are cytoplasmic; it reads ISTLTHGPRTHSCFKQKARRL. A helical membrane pass occupies residues 243–263; it reads TILLLLVFYICFLPFHILRVI. At 264–284 the chain is on the extracellular side; it reads RIESRLLSISCSIESHIHEAY. The chain crosses the membrane as a helical span at residues 285 to 305; that stretch reads IVSRPLAALNTFGNLLLYVVV. Topologically, residues 306 to 337 are cytoplasmic; the sequence is SNNFQQAFCSIVRCKASGDLEQGKKDSCSNNP.

Belongs to the G-protein coupled receptor 1 family. Predominantly expressed in the kidney with limited expression in the testis and the smooth muscle. Expressed in SLC26A4/pendrin-positive type B and non-A non-B intercalated cells (at protein level).

It localises to the cell membrane. Its function is as follows. G protein-coupled receptor for dicarboxylates and amino dicarboxylates. Receptor for itaconate produced by activated macrophages upon bacterial infection. In the respiratory epithelium, couples the binding of itaconate to the activation of GNA11 and downstream intracellular Ca(2+) release, leading to mucocilliary clearance of airborne pathogens. Receptor for leukotriene E4 (LTE4) produced by mast cells upon allergic inflammation. Binds with high affinity to LTE4 and elicits mucin release from pulmonary epithelium in response to airborne fungi allergens. Regulates mucin-producing goblet cell homeostasis. Receptor for alpha-ketoglutarate produced by proximal tubule renal cells upon metabolic alkalosis. In an intrarenal paracrine signaling pathway, binds alpha-ketoglutarate and drives transepithelial salt reabsorption and bicarbonate secretion by SLC26A4/pendrin-positive intercalated cells. In Mus musculus (Mouse), this protein is 2-oxoglutarate receptor 1 (Oxgr1).